The following is a 576-amino-acid chain: MSYKGFPSHSKVSKEDQEFYDLKNKAAEYYRSNGVPQKIESVLNEMFWQKPDDIYGYLANYFSGLSYTPVISKITGKEVFDGRGLTAVQAEVHCIIRNEEKMVCGAVMDGSFDGLPDGVESGEMLSNGDLQHLSITMALKWIRENFSPVLRGFNPTDQTNVDKILSDFAMARYLEHKDSLIREKEEELRNEAMSEAPPQATPTSAPAKDKKGNDKGKKGNITENPLPPAEPPVPRLPGATAVGAVSLAVAKTAAELLGTPLYRHITAVRDPQAQKEMQLPVPIITIMSCGKNSAGKLNLLEEIILMPSSSLRVREVIGMGLDLQCEMRRILNGSTYKALPVGVSDEGALQVGFDRPEQALDLLAEACANLALPLGSDLHLAVNCAAHSLMDYSRGKYEVMSGCHKSPDELVDIYEGLINKYPAIRSLIDPFRKEDVGQWERLASVIGQSCCLLADAASNLCPRWREAKPLPPGATKAIIRHHSDMTISDLIQSIAEHKETILAAGSGDASMVDLAVGSGVSFLKLGGLRGAKRMDKYNRLMAIEEEQEGIAGAGEINQPVSFESESGWNSLTVSAK.

The disordered stretch occupies residues 187–232; it reads ELRNEAMSEAPPQATPTSAPAKDKKGNDKGKKGNITENPLPPAEPP. Over residues 196-206 the composition is skewed to low complexity; that stretch reads APPQATPTSAP. The span at 207 to 217 shows a compositional bias: basic and acidic residues; it reads AKDKKGNDKGK. 2 residues coordinate substrate: glutamate 302 and lysine 524.

Belongs to the enolase family.

The enzyme catalyses (2R)-2-phosphoglycerate = phosphoenolpyruvate + H2O. Its pathway is carbohydrate degradation; glycolysis; pyruvate from D-glyceraldehyde 3-phosphate: step 4/5. This Danio rerio (Zebrafish) protein is Enolase 4 (eno4).